The chain runs to 881 residues: Armadillo repeat-containing protein 3 (881 aa).

ARM repeat units follow at residues 15 to 54 (DVFD…KFAL), 57 to 96 (EENK…ILAS), 98 to 138 (SDVK…NMSV), 140 to 179 (YTGK…NLVQ), 181 to 220 (FQCR…VITC), 222 to 262 (KEAR…NCLE), 264 to 304 (MDTM…KAAY), 306 to 345 (PENR…ALCE), 346 to 385 (NLSC…NLTT), 388 to 427 (PANA…NMAT), 429 to 468 (EPLR…ATAC), and 470 to 509 (VEAR…VCAG). 2 S-palmitoyl cysteine lipidation sites follow: Cys507 and Cys518. The interval 605-659 (NNKSDTSPPPSMEDKSSDVGYGRSISSSSSLRRGSKEKANAIFGSPTEEKSEPAS) is disordered. A compositionally biased stretch (low complexity) spans 622-636 (DVGYGRSISSSSSLR).

In terms of assembly, homodimer. Interacts with PIK3C3, PIK3R4 and BECN1. Interacts (via ARM domains) with ATG14. In terms of processing, palmitoylation is important for its function in autophagy. In terms of tissue distribution, testis-specific.

Essential for male fertility and sperm motility. During spermatogenesis, promotes the autophagic degradation of excessive ribosomes, providing energy resources for mitochondria and thus ensuring sperm flagellar motility. The protein is Armadillo repeat-containing protein 3 (Armc3) of Mus musculus (Mouse).